Here is a 193-residue protein sequence, read N- to C-terminus: Ribonuclease HII (193 aa).

The region spanning 15-193 is the RNase H type-2 domain; the sequence is YIVAGVDEAG…SYHRRSFKSC (179 aa). Residues Asp21, Glu22, and Asp112 each coordinate a divalent metal cation.

Belongs to the RNase HII family. The cofactor is Mn(2+). Requires Mg(2+) as cofactor.

It localises to the cytoplasm. The enzyme catalyses Endonucleolytic cleavage to 5'-phosphomonoester.. In terms of biological role, endonuclease that specifically degrades the RNA of RNA-DNA hybrids. This is Ribonuclease HII (rnhB) from Rickettsia prowazekii (strain Madrid E).